Reading from the N-terminus, the 192-residue chain is Interferon (192 aa).

The N-terminal stretch at 1 to 30 (MAVPASPQHPRGYGILLLTLLMKALAAAAA) is a signal peptide. 3 disulfides stabilise this stretch: cysteine 31–cysteine 128, cysteine 60–cysteine 154, and cysteine 67–cysteine 167. Residues asparagine 70 and asparagine 77 are each glycosylated (N-linked (GlcNAc...) asparagine).

Belongs to the alpha/beta interferon family.

It is found in the secreted. Its function is as follows. Has antiviral activities. This is Interferon from Meleagris gallopavo (Wild turkey).